The chain runs to 241 residues: Sugar fermentation stimulation protein homolog (241 aa).

It belongs to the SfsA family.

The protein is Sugar fermentation stimulation protein homolog of Yersinia enterocolitica serotype O:8 / biotype 1B (strain NCTC 13174 / 8081).